The chain runs to 1712 residues: Neurexin-2 (1712 aa).

Positions 1–28 are cleaved as a signal peptide; the sequence is MASGSRWRPTPPPLLLLLLLALAARADG. Residues 29 to 206 enclose the Laminin G-like 1 domain; it reads LEFGGGPGQW…LRGATADPLC (178 aa). At 29-1636 the chain is on the extracellular side; sequence LEFGGGPGQW…EVIRESSSTT (1608 aa). Asn-60 carries N-linked (GlcNAc...) asparagine glycosylation. In terms of domain architecture, EGF-like 1 spans 202–242; it reads ADPLCAPARNPCANGGLCTVLAPGEVGCDCSHTGFGGKFCS. Disulfide bonds link Cys-206–Cys-219, Cys-213–Cys-229, and Cys-231–Cys-241. Laminin G-like domains are found at residues 289 to 486 and 493 to 686; these read VATF…SFRC and DPVT…APFC. Asp-335 contributes to the Ca(2+) binding site. Asn-338 carries N-linked (GlcNAc...) asparagine glycosylation. Residues Leu-352 and Met-420 each coordinate Ca(2+). 5 disulfides stabilise this stretch: Cys-450/Cys-486, Cys-657/Cys-686, Cys-694/Cys-705, Cys-699/Cys-714, and Cys-716/Cys-726. Residues 690–727 enclose the EGF-like 2 domain; sequence TLKQCASAPCRNGGVCREGWNRFICDCIGTGFLGRVCE. 2 consecutive Laminin G-like domains span residues 732 to 904 and 918 to 1093; these read VLSY…ITYC and DPVT…ERGC. Ca(2+)-binding residues include Asp-779 and Leu-796. Asn-841 carries an N-linked (GlcNAc...) asparagine glycan. A Ca(2+)-binding site is contributed by Arg-854. 4 disulfides stabilise this stretch: Cys-1065–Cys-1093, Cys-1100–Cys-1111, Cys-1105–Cys-1120, and Cys-1122–Cys-1132. An EGF-like 3 domain is found at 1096-1133; it reads PSTTCTEESCANQGVCLQQWDGFTCDCTMTSYGGPVCN. The region spanning 1137–1345 is the Laminin G-like 6 domain; it reads TTYIFGKGGA…HLRLVGEGPS (209 aa). The Ca(2+) site is built by Asp-1189 and Val-1206. Asn-1236 is a glycosylation site (N-linked (GlcNAc...) asparagine). Ca(2+) is bound by residues Ile-1288 and Asn-1290. Positions 1373–1392 are disordered; sequence ATTTTRRGRSPTLRDSTTQN. An O-linked (Xyl...) (heparan sulfate) serine glycan is attached at Ser-1400. Disordered stretches follow at residues 1458-1489 and 1525-1626; these read ATQDTLPPPAARRPPSGGPCQAERDDSDCEEP and TLLS…PGAV. A helical membrane pass occupies residues 1637–1657; sequence GMVVGIVAAAALCILILLYAM. Over 1658 to 1712 the chain is Cytoplasmic; that stretch reads YKYRNRDEGSYQVDQSRNYISNSAQSNGAVVKEKAPAAPKTPSKAKKNKDKEYYV. The segment at 1679–1712 is disordered; sequence NSAQSNGAVVKEKAPAAPKTPSKAKKNKDKEYYV.

Belongs to the neurexin family. As to quaternary structure, the laminin G-like domain 1 binds to NXPH1. Interacts with PATJ. Interacts with CBLN1, CBLN2 and, less avidly, with CBLN4. Specific isoforms bind neuroligins NLGN1, NLGN2 and NLGN3. Specific isoforms bind to alpha-dystroglycan. Interacts (via Laminin G-like 1 domain) with IGSF21 (Ig-like 1 domain) in a trans-interaction manner. Interacts with CLSTN3. O-glycosylated; contains heparan sulfate. Heparan sulfate attachment is required for synapse development by mediating interactions with neuroligins. In terms of tissue distribution, predominantly expressed in brain.

It localises to the presynaptic cell membrane. Functionally, neuronal cell surface protein that may be involved in cell recognition and cell adhesion. May mediate intracellular signaling. In Homo sapiens (Human), this protein is Neurexin-2 (NRXN2).